The primary structure comprises 519 residues: T-complex protein 11-like protein 2 (519 aa).

The disordered stretch occupies residues 1–30; sequence MPFNGEKQCVGEDQPSDSDSSRFSESMASL. At S16 the chain carries Phosphoserine. Low complexity predominate over residues 17 to 29; it reads DSDSSRFSESMAS.

It belongs to the TCP11 family. As to quaternary structure, interacts with FMNL2; this interaction promotes muscle-derived satellite cell (MDSC) migration and differentiation.

Its subcellular location is the cytoplasm. The protein resides in the cytoskeleton. Promotes the migration of muscle-derived satellite cells (MDSCs) during differentiation throught interaction with FMNL2 and therefore may participate in microfilament assembly. The sequence is that of T-complex protein 11-like protein 2 from Homo sapiens (Human).